Here is a 190-residue protein sequence, read N- to C-terminus: Potassium-transporting ATPase KdpC subunit (190 aa).

Residues 13 to 33 traverse the membrane as a helical segment; that stretch reads VGFLLLTLMCGVVYPGIVTIF.

Belongs to the KdpC family. In terms of assembly, the system is composed of three essential subunits: KdpA, KdpB and KdpC.

It is found in the cell membrane. Its function is as follows. Part of the high-affinity ATP-driven potassium transport (or Kdp) system, which catalyzes the hydrolysis of ATP coupled with the electrogenic transport of potassium into the cytoplasm. This subunit acts as a catalytic chaperone that increases the ATP-binding affinity of the ATP-hydrolyzing subunit KdpB by the formation of a transient KdpB/KdpC/ATP ternary complex. The polypeptide is Potassium-transporting ATPase KdpC subunit (Listeria monocytogenes serotype 4a (strain HCC23)).